Consider the following 181-residue polypeptide: Inner membrane-spanning protein YciB (181 aa).

The next 5 helical transmembrane spans lie at Phe8 to Ala28, Ile53 to Phe73, Trp76 to Gly96, Leu121 to Phe141, and Phe149 to Ile169.

This sequence belongs to the YciB family.

The protein resides in the cell inner membrane. Functionally, plays a role in cell envelope biogenesis, maintenance of cell envelope integrity and membrane homeostasis. The protein is Inner membrane-spanning protein YciB of Coxiella burnetii (strain RSA 331 / Henzerling II).